Reading from the N-terminus, the 38-residue chain is Large ribosomal subunit protein bL36 (38 aa).

The protein belongs to the bacterial ribosomal protein bL36 family.

The sequence is that of Large ribosomal subunit protein bL36 from Ralstonia nicotianae (strain ATCC BAA-1114 / GMI1000) (Ralstonia solanacearum).